Consider the following 222-residue polypeptide: GTP cyclohydrolase 1 (222 aa).

3 residues coordinate Zn(2+): cysteine 111, histidine 114, and cysteine 182.

It belongs to the GTP cyclohydrolase I family. As to quaternary structure, homomer.

It catalyses the reaction GTP + H2O = 7,8-dihydroneopterin 3'-triphosphate + formate + H(+). Its pathway is cofactor biosynthesis; 7,8-dihydroneopterin triphosphate biosynthesis; 7,8-dihydroneopterin triphosphate from GTP: step 1/1. This Salmonella gallinarum (strain 287/91 / NCTC 13346) protein is GTP cyclohydrolase 1.